Here is a 142-residue protein sequence, read N- to C-terminus: Large ribosomal subunit protein uL13 (142 aa).

This sequence belongs to the universal ribosomal protein uL13 family. Part of the 50S ribosomal subunit.

This protein is one of the early assembly proteins of the 50S ribosomal subunit, although it is not seen to bind rRNA by itself. It is important during the early stages of 50S assembly. This Klebsiella pneumoniae (strain 342) protein is Large ribosomal subunit protein uL13.